The sequence spans 148 residues: Small ribosomal subunit protein eS6 (148 aa).

It belongs to the eukaryotic ribosomal protein eS6 family.

This Pyrobaculum arsenaticum (strain DSM 13514 / JCM 11321 / PZ6) protein is Small ribosomal subunit protein eS6.